Reading from the N-terminus, the 602-residue chain is ATP-dependent zinc metalloprotease FtsH 3 (602 aa).

At 1–18 (MNSWFLQVSKRLGPAGRR) the chain is on the cytoplasmic side. Residues 19–39 (LWLLGFMGVVLAVTLGLALRA) form a helical membrane-spanning segment. Over 40–117 (ARESATQRTA…DFASREDPSR (78 aa)) the chain is Periplasmic. The helical transmembrane segment at 118–138 (AASAVLPVVVLAAVGFALFTV) threads the bilayer. Residues 139 to 602 (SRRRSPKVFS…RRPRPEDQAA (464 aa)) are Cytoplasmic-facing. Residue 202–209 (GEPGTGKT) participates in ATP binding. Residue His425 participates in Zn(2+) binding. Glu426 is an active-site residue. The Zn(2+) site is built by His429 and Asp501.

In the central section; belongs to the AAA ATPase family. The protein in the C-terminal section; belongs to the peptidase M41 family. In terms of assembly, homohexamer. It depends on Zn(2+) as a cofactor.

It localises to the cell inner membrane. Functionally, acts as a processive, ATP-dependent zinc metallopeptidase for both cytoplasmic and membrane proteins. Plays a role in the quality control of integral membrane proteins. This is ATP-dependent zinc metalloprotease FtsH 3 from Sorangium cellulosum (strain So ce56) (Polyangium cellulosum (strain So ce56)).